We begin with the raw amino-acid sequence, 242 residues long: Type III pantothenate kinase (242 aa).

7–14 (DLGNSRFK) lines the ATP pocket. Substrate is bound by residues tyrosine 91 and 98-101 (GVDR). Catalysis depends on aspartate 100, which acts as the Proton acceptor. Threonine 121 is an ATP binding site. Residue threonine 171 participates in substrate binding.

Belongs to the type III pantothenate kinase family. In terms of assembly, homodimer. NH4(+) is required as a cofactor. It depends on K(+) as a cofactor.

The protein resides in the cytoplasm. It carries out the reaction (R)-pantothenate + ATP = (R)-4'-phosphopantothenate + ADP + H(+). Its pathway is cofactor biosynthesis; coenzyme A biosynthesis; CoA from (R)-pantothenate: step 1/5. Functionally, catalyzes the phosphorylation of pantothenate (Pan), the first step in CoA biosynthesis. This is Type III pantothenate kinase from Xanthomonas campestris pv. campestris (strain B100).